The sequence spans 456 residues: Cysteine--tRNA ligase (456 aa).

Position 30 (cysteine 30) interacts with Zn(2+). Residues 32–42 (MTVYDFCHIGH) carry the 'HIGH' region motif. Residues cysteine 211, histidine 236, and glutamate 240 each contribute to the Zn(2+) site. A 'KMSKS' region motif is present at residues 268 to 272 (KMSKS). Lysine 271 lines the ATP pocket.

It belongs to the class-I aminoacyl-tRNA synthetase family. In terms of assembly, monomer. Zn(2+) is required as a cofactor.

The protein resides in the cytoplasm. It catalyses the reaction tRNA(Cys) + L-cysteine + ATP = L-cysteinyl-tRNA(Cys) + AMP + diphosphate. This chain is Cysteine--tRNA ligase, found in Dichelobacter nodosus (strain VCS1703A).